A 375-amino-acid polypeptide reads, in one-letter code: Formate dehydrogenase (375 aa).

Substrate is bound by residues I94 and N120. Residues 175 to 176 (RI), D196, 231 to 235 (PLHEK), T257, D283, 312 to 315 (HMSG), and S358 contribute to the NAD(+) site.

It belongs to the D-isomer specific 2-hydroxyacid dehydrogenase family. FDH subfamily. In terms of assembly, homodimer.

The protein localises to the cytoplasm. It catalyses the reaction formate + NAD(+) = CO2 + NADH. Functionally, catalyzes the NAD(+)-dependent oxidation of formate to carbon dioxide. Formate oxidation is the final step in the methanol oxidation pathway in methylotrophic microorganisms. Has a role in the detoxification of exogenous formate in non-methylotrophic organisms. The sequence is that of Formate dehydrogenase from Neurospora crassa (strain ATCC 24698 / 74-OR23-1A / CBS 708.71 / DSM 1257 / FGSC 987).